The following is a 118-amino-acid chain: Small ribosomal subunit protein uS13 (118 aa).

The interval 94–118 (SLPLRGQRTKTNARTRKGPRKPIKK) is disordered.

It belongs to the universal ribosomal protein uS13 family. As to quaternary structure, part of the 30S ribosomal subunit. Forms a loose heterodimer with protein S19. Forms two bridges to the 50S subunit in the 70S ribosome.

Located at the top of the head of the 30S subunit, it contacts several helices of the 16S rRNA. In the 70S ribosome it contacts the 23S rRNA (bridge B1a) and protein L5 of the 50S subunit (bridge B1b), connecting the 2 subunits; these bridges are implicated in subunit movement. Contacts the tRNAs in the A and P-sites. The chain is Small ribosomal subunit protein uS13 from Shewanella oneidensis (strain ATCC 700550 / JCM 31522 / CIP 106686 / LMG 19005 / NCIMB 14063 / MR-1).